A 576-amino-acid chain; its full sequence is Arginine--tRNA ligase (576 aa).

Positions 122 to 132 (PNVAKEMHVGH) match the 'HIGH' region motif.

This sequence belongs to the class-I aminoacyl-tRNA synthetase family. In terms of assembly, monomer.

Its subcellular location is the cytoplasm. The catalysed reaction is tRNA(Arg) + L-arginine + ATP = L-arginyl-tRNA(Arg) + AMP + diphosphate. In Serratia proteamaculans (strain 568), this protein is Arginine--tRNA ligase.